The primary structure comprises 391 residues: Digeranylgeranylglycerophospholipid reductase (391 aa).

FAD contacts are provided by Gly19, Asp38, Cys49, Ala50, Ala52, Arg99, Val123, Asp279, Gly291, and Ile292. Residue Val369 coordinates a 2,3-bis-O-(geranylgeranyl)-sn-glycerol 1-phospholipid.

It belongs to the geranylgeranyl reductase family. DGGGPL reductase subfamily. It depends on FAD as a cofactor.

It carries out the reaction a 2,3-bis-O-phytanyl-sn-glycerol 1-phospholipid + 8 A = a 2,3-bis-O-(geranylgeranyl)-sn-glycerol 1-phospholipid + 8 AH2. The enzyme catalyses 2,3-bis-O-(phytanyl)-sn-glycerol 1-phosphate + 8 A = 2,3-bis-O-(geranylgeranyl)-sn-glycerol 1-phosphate + 8 AH2. It catalyses the reaction CDP-2,3-bis-O-(geranylgeranyl)-sn-glycerol + 8 AH2 = CDP-2,3-bis-O-(phytanyl)-sn-glycerol + 8 A. The catalysed reaction is archaetidylserine + 8 AH2 = 2,3-bis-O-phytanyl-sn-glycero-3-phospho-L-serine + 8 A. It participates in membrane lipid metabolism; glycerophospholipid metabolism. Functionally, is involved in the reduction of 2,3-digeranylgeranylglycerophospholipids (unsaturated archaeols) into 2,3-diphytanylglycerophospholipids (saturated archaeols) in the biosynthesis of archaeal membrane lipids. Catalyzes the formation of archaetidic acid (2,3-di-O-phytanyl-sn-glyceryl phosphate) from 2,3-di-O-geranylgeranylglyceryl phosphate (DGGGP) via the hydrogenation of each double bond of the isoprenoid chains. Is also probably able to reduce double bonds of geranyl groups in CDP-2,3-bis-O-(geranylgeranyl)-sn-glycerol and archaetidylserine, thus acting at various stages in the biosynthesis of archaeal membrane lipids. This Methanococcus aeolicus (strain ATCC BAA-1280 / DSM 17508 / OCM 812 / Nankai-3) protein is Digeranylgeranylglycerophospholipid reductase.